Here is a 385-residue protein sequence, read N- to C-terminus: UDP-N-acetylglucosamine--N-acetylmuramyl-(pentapeptide) pyrophosphoryl-undecaprenol N-acetylglucosamine transferase (385 aa).

UDP-N-acetyl-alpha-D-glucosamine is bound by residues 24-26 (TAG), Asn143, Arg180, Ser214, and Gln310.

Belongs to the glycosyltransferase 28 family. MurG subfamily.

It localises to the cell membrane. It carries out the reaction di-trans,octa-cis-undecaprenyl diphospho-N-acetyl-alpha-D-muramoyl-L-alanyl-D-glutamyl-meso-2,6-diaminopimeloyl-D-alanyl-D-alanine + UDP-N-acetyl-alpha-D-glucosamine = di-trans,octa-cis-undecaprenyl diphospho-[N-acetyl-alpha-D-glucosaminyl-(1-&gt;4)]-N-acetyl-alpha-D-muramoyl-L-alanyl-D-glutamyl-meso-2,6-diaminopimeloyl-D-alanyl-D-alanine + UDP + H(+). It participates in cell wall biogenesis; peptidoglycan biosynthesis. In terms of biological role, cell wall formation. Catalyzes the transfer of a GlcNAc subunit on undecaprenyl-pyrophosphoryl-MurNAc-pentapeptide (lipid intermediate I) to form undecaprenyl-pyrophosphoryl-MurNAc-(pentapeptide)GlcNAc (lipid intermediate II). This is UDP-N-acetylglucosamine--N-acetylmuramyl-(pentapeptide) pyrophosphoryl-undecaprenol N-acetylglucosamine transferase from Mycolicibacterium smegmatis (strain ATCC 700084 / mc(2)155) (Mycobacterium smegmatis).